A 131-amino-acid chain; its full sequence is Global transcriptional regulator Spx 2 (131 aa).

Cysteines 10 and 13 form a disulfide.

The protein belongs to the ArsC family. Spx subfamily. Interacts with the C-terminal domain of the alpha subunit of the RNAP.

Its subcellular location is the cytoplasm. In terms of biological role, global transcriptional regulator that plays a key role in stress response and exerts either positive or negative regulation of genes. Acts by interacting with the C-terminal domain of the alpha subunit of the RNA polymerase (RNAP). This interaction can enhance binding of RNAP to the promoter region of target genes and stimulate their transcription, or block interaction of RNAP with activator. The protein is Global transcriptional regulator Spx 2 of Bacillus cereus (strain ATCC 14579 / DSM 31 / CCUG 7414 / JCM 2152 / NBRC 15305 / NCIMB 9373 / NCTC 2599 / NRRL B-3711).